The chain runs to 397 residues: LIM/homeobox protein Lhx9 (397 aa).

Positions 40-60 (RSKTESRLAKGGQMNGRETNM) are disordered. LIM zinc-binding domains follow at residues 69 to 130 (ALCA…RFSV) and 131 to 193 (QRCA…LLQG). The homeobox DNA-binding region spans 267 to 326 (TKRMATSFKHHQLRTMKSYFAINHNPDAKDLKQLAQKTGLTKRVLQVWFQNARAKFRRNL). Disordered regions lie at residues 330–363 (ENGG…TTLT) and 378–397 (SNLD…TNLF). Over residues 353–363 (LTPPGTATTLT) the composition is skewed to low complexity. Over residues 387–397 (SPSQTTLTNLF) the composition is skewed to polar residues.

It is found in the nucleus. Functionally, may be involved in gonadal development. This chain is LIM/homeobox protein Lhx9 (LHX9), found in Gallus gallus (Chicken).